Here is a 64-residue protein sequence, read N- to C-terminus: H/ACA ribonucleoprotein complex subunit 3-like protein (64 aa).

Belongs to the NOP10 family. In terms of assembly, component of the small nucleolar ribonucleoprotein particles containing H/ACA-type snoRNAs (H/ACA snoRNPs).

It localises to the nucleus. The protein localises to the nucleolus. In terms of biological role, required for ribosome biogenesis. Part of a complex which catalyzes pseudouridylation of rRNA. This involves the isomerization of uridine such that the ribose is subsequently attached to C5, instead of the normal N1. Pseudouridine ('psi') residues may serve to stabilize the conformation of rRNAs. This Arabidopsis thaliana (Mouse-ear cress) protein is H/ACA ribonucleoprotein complex subunit 3-like protein.